The chain runs to 372 residues: Cell division protein FtsZ 1 (372 aa).

Residues 51 to 55 (GAGCN), 138 to 140 (GTG), E169, R173, and D216 each bind GTP. The segment covering 350–360 (PEEETPLETPE) has biased composition (acidic residues). The interval 350-372 (PEEETPLETPEESPSIEISIPEL) is disordered. Positions 361–372 (ESPSIEISIPEL) are enriched in low complexity.

It belongs to the FtsZ family. Homodimer. Polymerizes to form a dynamic ring structure in a strictly GTP-dependent manner. Interacts directly with several other division proteins.

The protein localises to the cytoplasm. Functionally, essential cell division protein that forms a contractile ring structure (Z ring) at the future cell division site. The regulation of the ring assembly controls the timing and the location of cell division. One of the functions of the FtsZ ring is to recruit other cell division proteins to the septum to produce a new cell wall between the dividing cells. Binds GTP and shows GTPase activity. The protein is Cell division protein FtsZ 1 of Pyrococcus furiosus (strain ATCC 43587 / DSM 3638 / JCM 8422 / Vc1).